We begin with the raw amino-acid sequence, 107 residues long: uncharacterized protein (107 aa).

The Cytoplasmic segment spans residues 1-4; it reads MSLV. The helical transmembrane segment at 5–25 threads the bilayer; the sequence is IDIADTIVSLTALIGLIITLI. Residues 26-107 are Extracellular-facing; it reads KFHSQNKEDA…ELCRSSDRSK (82 aa).

It localises to the host membrane. This is an uncharacterized protein from Acidianus sp. F28 (AFV-2).